The sequence spans 493 residues: Tripartite motif-containing protein 5 (493 aa).

The residue at position 2 (alanine 2) is an N-acetylalanine. An RING-type zinc finger spans residues 15-59 (CPICLELLTQPLSLDCGHSFCQACLTANHKKSMLDKGESSCPVCR). A Phosphoserine modification is found at serine 86. Residues 90-132 (QKVDHCARHGEKLLLFCQEDGKVICWLCERSQEHRGHHTFLTE) form a B box-type zinc finger. The Zn(2+) site is built by cysteine 95, histidine 98, cysteine 117, and histidine 123. Positions 131–240 (TEEVAREYQV…LISDLERRLQ (110 aa)) form a coiled coil. Residues 185–198 (FEQLRDILDWEESN) are required for interaction with GABARAP and for autophagy. A B30.2/SPRY domain is found at 281 to 493 (LKGMLEVFRE…VPMTLCSPSS (213 aa)).

It belongs to the TRIM/RBCC family. In terms of assembly, can form homodimers and homotrimers. In addition to lower-order dimerization, also exhibits a higher-order multimerization and both low- and high-order multimerizations are essential for its restriction activity. Interacts with BTBD1 and BTBD2. Interacts with PSMC4, PSMC5, PSMD7 and HSPA8/HSC70. Interacts (via B30.2/SPRY domain) with HSPA1A/B. Interacts with PSMC2, MAP3K7/TAK1, TAB2 and TAB3. Interacts with SQSTM1. Interacts with TRIM6 and TRIM34. Interacts with ULK1 (phosphorylated form), GABARAP, GABARAPL1, GABARAPL2, MAP1LC3A, MAP1LC3C and BECN1. Post-translationally, degraded in a proteasome-independent fashion in the absence of viral infection but in a proteasome-dependent fashion following exposure to restriction sensitive virus. Autoubiquitinated in a RING finger- and UBE2D2-dependent manner. Monoubiquitinated by TRIM21. Deubiquitinated by Yersinia YopJ. Ubiquitination may not lead to proteasomal degradation.

It is found in the cytoplasm. Its subcellular location is the nucleus. The catalysed reaction is S-ubiquitinyl-[E2 ubiquitin-conjugating enzyme]-L-cysteine + [acceptor protein]-L-lysine = [E2 ubiquitin-conjugating enzyme]-L-cysteine + N(6)-ubiquitinyl-[acceptor protein]-L-lysine.. It participates in protein modification; protein ubiquitination. In terms of biological role, capsid-specific restriction factor that prevents infection from non-host-adapted retroviruses. Blocks viral replication early in the life cycle, after viral entry but before reverse transcription. In addition to acting as a capsid-specific restriction factor, also acts as a pattern recognition receptor that activates innate immune signaling in response to the retroviral capsid lattice. Binding to the viral capsid triggers its E3 ubiquitin ligase activity, and in concert with the heterodimeric ubiquitin conjugating enzyme complex UBE2V1-UBE2N (also known as UBC13-UEV1A complex) generates 'Lys-63'-linked polyubiquitin chains, which in turn are catalysts in the autophosphorylation of the MAP3K7/TAK1 complex (includes TAK1, TAB2, and TAB3). Activation of the MAP3K7/TAK1 complex by autophosphorylation results in the induction and expression of NF-kappa-B and MAPK-responsive inflammatory genes, thereby leading to an innate immune response in the infected cell. Plays a role in regulating autophagy through activation of autophagy regulator BECN1 by causing its dissociation from its inhibitors BCL2 and TAB2. The sequence is that of Tripartite motif-containing protein 5 (TRIM5) from Pan paniscus (Pygmy chimpanzee).